The sequence spans 382 residues: D-galactonate dehydratase (382 aa).

Aspartate 183 is a binding site for Mg(2+). Histidine 185 serves as the catalytic Proton donor. Glutamate 209 and glutamate 235 together coordinate Mg(2+). Catalysis depends on histidine 285, which acts as the Proton acceptor.

Belongs to the mandelate racemase/muconate lactonizing enzyme family. GalD subfamily. The cofactor is Mg(2+).

It carries out the reaction D-galactonate = 2-dehydro-3-deoxy-D-galactonate + H2O. Its pathway is carbohydrate acid metabolism; D-galactonate degradation; D-glyceraldehyde 3-phosphate and pyruvate from D-galactonate: step 1/3. Catalyzes the dehydration of D-galactonate to 2-keto-3-deoxy-D-galactonate. This is D-galactonate dehydratase from Escherichia fergusonii (strain ATCC 35469 / DSM 13698 / CCUG 18766 / IAM 14443 / JCM 21226 / LMG 7866 / NBRC 102419 / NCTC 12128 / CDC 0568-73).